We begin with the raw amino-acid sequence, 87 residues long: MANIKSAKKRAIQSEKRRKHNASRRSMVRTFIKKVYAAIATGDKEAAQKAFHDMQPIVDRHACKGLIHKNKAARHKSNLTAQINAMQ.

A disordered region spans residues 1–26 (MANIKSAKKRAIQSEKRRKHNASRRS).

Belongs to the bacterial ribosomal protein bS20 family.

Functionally, binds directly to 16S ribosomal RNA. The polypeptide is Small ribosomal subunit protein bS20 (Photorhabdus laumondii subsp. laumondii (strain DSM 15139 / CIP 105565 / TT01) (Photorhabdus luminescens subsp. laumondii)).